The chain runs to 207 residues: Large ribosomal subunit protein uL4 (207 aa).

The interval 49–78 is disordered; that stretch reads HAVKNRSAVSGGGRKPWRQKGTGRARQGSI.

It belongs to the universal ribosomal protein uL4 family. In terms of assembly, part of the 50S ribosomal subunit.

Functionally, one of the primary rRNA binding proteins, this protein initially binds near the 5'-end of the 23S rRNA. It is important during the early stages of 50S assembly. It makes multiple contacts with different domains of the 23S rRNA in the assembled 50S subunit and ribosome. In terms of biological role, forms part of the polypeptide exit tunnel. In Streptococcus equi subsp. zooepidemicus (strain MGCS10565), this protein is Large ribosomal subunit protein uL4.